Reading from the N-terminus, the 330-residue chain is WRKY transcription factor WRKY51 (330 aa).

The segment at 39 to 61 (QTGTSERSPAPAPAQEQQQQQQV) is disordered. A compositionally biased stretch (low complexity) spans 51–60 (PAQEQQQQQQ). Residues 74–81 (FKKVISML) carry the Nuclear localization signal motif. Disordered regions lie at residues 91–117 (RGPVVAQSSGPAASEPAPVRSSPSAVS) and 302–330 (YEGEHRHTPSAAGQDHPPAPPPPLALPLA). Residues 101-117 (PAASEPAPVRSSPSAVS) are compositionally biased toward low complexity. A DNA-binding region (WRKY) is located at residues 245–311 (KVADIPADDF…YEGEHRHTPS (67 aa)). A compositionally biased stretch (pro residues) spans 318–330 (PPAPPPPLALPLA).

This sequence belongs to the WRKY group II-a family. In terms of tissue distribution, highly expressed in aleurone cells. In seeds, predominantly present in the plumule, radicle and scutellum of the embryo.

It localises to the nucleus. In terms of biological role, transcription factor. Interacts, when in complex with WRKY71, specifically with the W box (5'-(T)TGAC[CT]-3'), a frequently occurring elicitor-responsive cis-acting element. Represses specifically gibberellic acid (GA)-induced promoters in aleurone cells, probably by interfering with GAM1. The chain is WRKY transcription factor WRKY51 from Oryza sativa subsp. indica (Rice).